The following is a 209-amino-acid chain: uncharacterized protein (209 aa).

The region spanning 1–67 (MEILPKYKPE…LIMYNYWTID (67 aa)) is the MPN domain. Residues histidine 17, histidine 19, and aspartate 30 each contribute to the Zn(2+) site. The short motif at 17-30 (HTHPKGPAEPSIND) is the JAMM motif element.

This is an uncharacterized protein from Acidianus convivator (ATV).